We begin with the raw amino-acid sequence, 424 residues long: PDZ and LIM domain protein 7 (424 aa).

Positions 1–85 (MDSFKVVLEG…RLSLSLSRAQ (85 aa)) constitute a PDZ domain. Ser-78 is modified (phosphoserine). Polar residues predominate over residues 81 to 98 (LSRAQPAQSKPQKVQTPD). The tract at residues 81 to 221 (LSRAQPAQSK…HTQPATPTPM (141 aa)) is disordered. Thr-96 bears the Phosphothreonine mark. A compositionally biased stretch (basic and acidic residues) spans 110–123 (SKQRLMEDTEDWRP). The span at 174–187 (EPWPGPTTPSPTSR) shows a compositional bias: pro residues. The span at 204–221 (KTSTVLTRHTQPATPTPM) shows a compositional bias: polar residues. LIM zinc-binding domains lie at 247–305 (PVCH…VRYA), 306–365 (PSCA…MFGT), and 366–424 (KCRG…FSHV).

Binds via its LIM zinc-binding 3 domain (LIM 3) domain to endocytic codes of INSR, but not with those of IGF1R, LDLR, TFRC, or EGFR. Interacts with various PKC isoforms through the LIM zinc-binding domains. Binds to RET in a phosphorylation-independent manner via its LIM zinc-binding 2 domain (LIM 2). Probably part of a complex with SHC and the RET dimer. Interacts with TPM2, TBX4 and TBX5.

The protein localises to the cytoplasm. Its subcellular location is the cytoskeleton. May function as a scaffold on which the coordinated assembly of proteins can occur. May play a role as an adapter that, via its PDZ domain, localizes LIM-binding proteins to actin filaments of both skeletal muscle and nonmuscle tissues. Involved in both of the two fundamental mechanisms of bone formation, direct bone formation (e.g. embryonic flat bones mandible and cranium), and endochondral bone formation (e.g. embryonic long bone development). Plays a role during fracture repair. Involved in BMP6 signaling pathway. The polypeptide is PDZ and LIM domain protein 7 (PDLIM7) (Bos taurus (Bovine)).